The following is an 856-amino-acid chain: Envelope glycoprotein gp160 (856 aa).

The signal sequence occupies residues 1-32 (MRVKEKYQHLWRWGWRWGTMLLGMLMICSATE). Topologically, residues 33-684 (KLWVTVYYGV…ITNWLWYIKL (652 aa)) are extracellular. C54 and C74 form a disulfide bridge. N-linked (GlcNAc...) asparagine; by host glycosylation is found at N88, N136, N141, N156, N160, N186, N197, N230, N234, N241, N262, N276, N289, N295, N301, N332, N339, and N356. Disulfide bonds link C119–C205, C126–C196, C131–C157, C218–C247, and C228–C239. The segment at 131 to 156 (CTDLKNDTNTNSSSGRMIMEKGEIKN) is V1. A V2 region spans residues 157 to 196 (CSFNISTSIRGKVQKEYAFFYKLDIIPIDNDTTSYKLTSC). The tract at residues 296–330 (CTRPNNNTRKRIRIQRGPGRAFVTIGKIGNMRQAH) is V3. A disulfide bridge connects residues C296 and C331. A CD4-binding loop region spans residues 364–374 (SSGGDPEIVTH). 2 disulfide bridges follow: C378–C445 and C385–C418. Positions 385-418 (CNSTQLFNSTWFNSTWSTEGSNNTEGSDTITLPC) are V4. 6 N-linked (GlcNAc...) asparagine; by host glycosylation sites follow: N386, N392, N397, N406, N448, and N463. V5 stretches follow at residues 461-471 (SNNESEIFRPG) and 463-471 (NESEIFRPG). The segment at 512 to 532 (AVGIGALFLGFLGAAGSTMGA) is fusion peptide. Positions 574 to 592 (KQLQARILAVERYLKDQQL) are immunosuppression. A disulfide bridge connects residues C598 and C604. N-linked (GlcNAc...) asparagine; by host glycosylation is found at N611, N616, N624, N637, and N674. A coiled-coil region spans residues 633–667 (REINNYTSLIHSLIEESQNQQEKNEQELLELDKWA). An MPER; binding to GalCer region spans residues 662–683 (ELDKWASLWNWFNITNWLWYIK). The chain crosses the membrane as a helical span at residues 685–705 (FIMIVGGLVGLRIVFAVLSIV). Over 706–856 (NRVRQGYSPL…IRQGLERILL (151 aa)) the chain is Cytoplasmic. The YXXL motif; contains endocytosis signal signature appears at 712–715 (YSPL). The disordered stretch occupies residues 718–742 (QTHLPTPRGPDRPEGIEEEGGERDR). S-palmitoyl cysteine; by host attachment occurs at residues C764 and C837. A Di-leucine internalization motif motif is present at residues 855 to 856 (LL).

This sequence belongs to the HIV-1 env protein family. As to quaternary structure, the mature envelope protein (Env) consists of a homotrimer of non-covalently associated gp120-gp41 heterodimers. The resulting complex protrudes from the virus surface as a spike. There seems to be as few as 10 spikes on the average virion. Interacts with host CD4, CCR5 and CXCR4. Gp120 also interacts with the C-type lectins CD209/DC-SIGN and CLEC4M/DC-SIGNR (collectively referred to as DC-SIGN(R)). Gp120 and gp41 interact with GalCer. Gp120 interacts with host ITGA4/ITGB7 complex; on CD4+ T-cells, this interaction results in rapid activation of integrin ITGAL/LFA-1, which facilitates efficient cell-to-cell spreading of HIV-1. Gp120 interacts with cell-associated heparan sulfate; this interaction increases virus infectivity on permissive cells and may be involved in infection of CD4- cells. The mature envelope protein (Env) consists of a homotrimer of non-covalently associated gp120-gp41 heterodimers. The resulting complex protrudes from the virus surface as a spike. There seems to be as few as 10 spikes on the average virion. Palmitoylation of the transmembrane protein and of Env polyprotein (prior to its proteolytic cleavage) is essential for their association with host cell membrane lipid rafts. Palmitoylation is therefore required for envelope trafficking to classical lipid rafts, but not for viral replication. Post-translationally, highly glycosylated by host. The high number of glycan on the protein is reffered to as 'glycan shield' because it contributes to hide protein sequence from adaptive immune system. In terms of processing, specific enzymatic cleavages in vivo yield mature proteins. Envelope glycoproteins are synthesized as an inactive precursor that is heavily N-glycosylated and processed likely by host cell furin in the Golgi to yield the mature SU and TM proteins. The cleavage site between SU and TM requires the minimal sequence [KR]-X-[KR]-R. About 2 of the 9 disulfide bonds of gp41 are reduced by P4HB/PDI, following binding to CD4 receptor.

It localises to the virion membrane. Its subcellular location is the host cell membrane. The protein localises to the host endosome membrane. In terms of biological role, oligomerizes in the host endoplasmic reticulum into predominantly trimers. In a second time, gp160 transits in the host Golgi, where glycosylation is completed. The precursor is then proteolytically cleaved in the trans-Golgi and thereby activated by cellular furin or furin-like proteases to produce gp120 and gp41. Attaches the virus to the host lymphoid cell by binding to the primary receptor CD4. This interaction induces a structural rearrangement creating a high affinity binding site for a chemokine coreceptor like CXCR4 and/or CCR5. Acts as a ligand for CD209/DC-SIGN and CLEC4M/DC-SIGNR, which are respectively found on dendritic cells (DCs), and on endothelial cells of liver sinusoids and lymph node sinuses. These interactions allow capture of viral particles at mucosal surfaces by these cells and subsequent transmission to permissive cells. HIV subverts the migration properties of dendritic cells to gain access to CD4+ T-cells in lymph nodes. Virus transmission to permissive T-cells occurs either in trans (without DCs infection, through viral capture and transmission), or in cis (following DCs productive infection, through the usual CD4-gp120 interaction), thereby inducing a robust infection. In trans infection, bound virions remain infectious over days and it is proposed that they are not degraded, but protected in non-lysosomal acidic organelles within the DCs close to the cell membrane thus contributing to the viral infectious potential during DCs' migration from the periphery to the lymphoid tissues. On arrival at lymphoid tissues, intact virions recycle back to DCs' cell surface allowing virus transmission to CD4+ T-cells. Functionally, acts as a class I viral fusion protein. Under the current model, the protein has at least 3 conformational states: pre-fusion native state, pre-hairpin intermediate state, and post-fusion hairpin state. During fusion of viral and target intracellular membranes, the coiled coil regions (heptad repeats) assume a trimer-of-hairpins structure, positioning the fusion peptide in close proximity to the C-terminal region of the ectodomain. The formation of this structure appears to drive apposition and subsequent fusion of viral and target cell membranes. Complete fusion occurs in host cell endosomes and is dynamin-dependent, however some lipid transfer might occur at the plasma membrane. The virus undergoes clathrin-dependent internalization long before endosomal fusion, thus minimizing the surface exposure of conserved viral epitopes during fusion and reducing the efficacy of inhibitors targeting these epitopes. Membranes fusion leads to delivery of the nucleocapsid into the cytoplasm. The protein is Envelope glycoprotein gp160 of Homo sapiens (Human).